We begin with the raw amino-acid sequence, 130 residues long: Small ribosomal subunit protein uS8B (130 aa).

Belongs to the universal ribosomal protein uS8 family.

The sequence is that of Small ribosomal subunit protein uS8B (RpS15Ab) from Drosophila melanogaster (Fruit fly).